Consider the following 191-residue polypeptide: uncharacterized protein (191 aa).

Disordered stretches follow at residues 1 to 42 (MSEE…DADA) and 145 to 191 (QNQE…IDLD). Basic and acidic residues-rich tracts occupy residues 11-26 (PRPDEADAVDETRATG) and 147-178 (QERRWTTGDTAPKDPSDPRDLDERGTDGRDEG).

As to quaternary structure, it may form a heterotetramer of two glucokinase subunits (glk) with two ORF2 proteins.

Its function is as follows. May be involved in glucose transport or metabolism. This is an uncharacterized protein from Streptomyces coelicolor (strain ATCC BAA-471 / A3(2) / M145).